Reading from the N-terminus, the 567-residue chain is Urease subunit alpha (567 aa).

The Urease domain maps to 129-567 (GGVDTHIHWI…LPMAQRYFLF (439 aa)). Positions 134, 136, and 217 each coordinate Ni(2+). Lysine 217 is subject to N6-carboxylysine. A substrate-binding site is contributed by histidine 219. Ni(2+) is bound by residues histidine 246 and histidine 272. The Proton donor role is filled by histidine 320. Aspartate 360 serves as a coordination point for Ni(2+).

The protein belongs to the metallo-dependent hydrolases superfamily. Urease alpha subunit family. In terms of assembly, heterotrimer of UreA (gamma), UreB (beta) and UreC (alpha) subunits. Three heterotrimers associate to form the active enzyme. Requires Ni cation as cofactor. In terms of processing, carboxylation allows a single lysine to coordinate two nickel ions.

The protein resides in the cytoplasm. It carries out the reaction urea + 2 H2O + H(+) = hydrogencarbonate + 2 NH4(+). The protein operates within nitrogen metabolism; urea degradation; CO(2) and NH(3) from urea (urease route): step 1/1. The protein is Urease subunit alpha of Escherichia coli O157:H7.